A 308-amino-acid polypeptide reads, in one-letter code: tRNA dimethylallyltransferase (308 aa).

Residue 14 to 21 coordinates ATP; sequence GPTASGKT. Residue 16–21 coordinates substrate; sequence TASGKT. Interaction with substrate tRNA regions lie at residues 39 to 42, 163 to 167, and 244 to 249; these read DSAL, QRLAR, and RCVGYR.

This sequence belongs to the IPP transferase family. As to quaternary structure, monomer. It depends on Mg(2+) as a cofactor.

The enzyme catalyses adenosine(37) in tRNA + dimethylallyl diphosphate = N(6)-dimethylallyladenosine(37) in tRNA + diphosphate. Its function is as follows. Catalyzes the transfer of a dimethylallyl group onto the adenine at position 37 in tRNAs that read codons beginning with uridine, leading to the formation of N6-(dimethylallyl)adenosine (i(6)A). The sequence is that of tRNA dimethylallyltransferase from Shewanella halifaxensis (strain HAW-EB4).